The primary structure comprises 160 residues: Urease accessory protein UreE (160 aa).

This sequence belongs to the UreE family.

It is found in the cytoplasm. Its function is as follows. Involved in urease metallocenter assembly. Binds nickel. Probably functions as a nickel donor during metallocenter assembly. This Acinetobacter baumannii (strain AB307-0294) protein is Urease accessory protein UreE.